A 972-amino-acid chain; its full sequence is MDTDLYDEFGNYIGPELDSDEDDDELGRETKDLDEMDDDDDDDDVGDHDDDHPGMEVVLHEDKKYYPTAEEVYGPEVETIVQEEDTQPLTEPIIKPVKTKKFTLMEQTLPVTVYEMDFLADLMDNSELIRNVTLCGHLHHGKTCFVDCLIEQTHPEIRKRYDQDLCYTDILFTEQERGVGIKSTPVTVVLPDTKGKSYLFNIMDTPGHVNFSDEVTAGLRISDGVVLFIDAAEGVMLNTERLIKHAVQERLAVTVCINKIDRLILELKLPPTDAYYKLRHIVDEVNGLISMYSTDENLILSPLLGNVCFSSSQYSICFTLGSFAKIYADTFGDINYQEFAKRLWGDIYFNPKTRKFTKKAPTSSSQRSFVEFILEPLYKILAQVVGDVDTSLPRTLDELGIHLTKEELKLNIRPLLRLVCKKFFGEFTGFVDMCVQHIPSPKVGAKPKIEHTYTGGVDSDLGEAMSDCDPDGPLMCHTTKMYSTDDGVQFHAFGRVLSGTIHAGQPVKVLGENYTLEDEEDSQICTVGRLWISVARYHIEVNRVPAGNWVLIEGVDQPIVKTATITEPRGNEEAQIFRPLKFNTTSVIKIAVEPVNPSELPKMLDGLRKVNKSYPSLTTKVEESGEHVILGTGELYLDCVMHDLRKMYSEIDIKVADPVVTFCETVVETSSLKCFAETPNKKNKITMIAEPLEKGLAEDIENEVVQITWNRKKLGEFFQTKYDWDLLAARSIWAFGPDATGPNILVDDTLPSEVDKALLGSVKDSIVQGFQWGTREGPLCDELIRNVKFKILDAVVAQEPLHRGGGQIIPTARRVVYSAFLMATPRLMEPYYFVEVQAPADCVSAVYTVLARRRGHVTQDAPIPGSPLYTIKAFIPAIDSFGFETDLRTHTQGQAFSLSVFHHWQIVPGDPLDKSIVIRPLEPQPAPHLAREFMIKTRRRKGLSEDVSISKFFDDPMLLELAKQDVVLNYPM.

At methionine 1 the chain carries N-acetylmethionine. Residues 1-54 (MDTDLYDEFGNYIGPELDSDEDDDELGRETKDLDEMDDDDDDDDVGDHDDDHPG) form a disordered region. Composition is skewed to acidic residues over residues 17-26 (LDSDEDDDEL) and 34-48 (DEMD…VGDH). Serine 19 is subject to Phosphoserine. Lysine 64 is covalently cross-linked (Glycyl lysine isopeptide (Lys-Gly) (interchain with G-Cter in SUMO1); alternate). Residue lysine 64 forms a Glycyl lysine isopeptide (Lys-Gly) (interchain with G-Cter in SUMO2); alternate linkage. Threonine 86 carries the phosphothreonine modification. Residues 127 to 409 (ELIRNVTLCG…GIHLTKEELK (283 aa)) form the tr-type G domain. GTP contacts are provided by residues 136–143 (GHLHHGKT), 204–208 (DTPGH), and 258–261 (NKID).

The protein belongs to the TRAFAC class translation factor GTPase superfamily. Classic translation factor GTPase family. EF-G/EF-2 subfamily. In terms of assembly, component of the U5 snRNP and the U4/U6-U5 tri-snRNP complex, a building block of the spliceosome. The U4/U6-U5 tri-snRNP complex is composed of the U4, U6 and U5 snRNAs and at least PRPF3, PRPF4, PRPF6, PRPF8, PRPF31, SNRNP200, TXNL4A, SNRNP40, DDX23, CD2BP2, PPIH, SNU13, EFTUD2, SART1 and USP39. Component of the pre-catalytic, catalytic and post-catalytic spliceosome complexes. Component of the minor spliceosome, which splices U12-type introns. Within this complex, interacts with CRIPT. Interacts with ERBB4 and PRPF8. Interacts with PIH1D1. Interacts with RPAP3 and URI1 in a ZNHIT2-dependent manner. Interacts with NRDE2. Interacts with FAM50A. Interacts with UBL5.

It localises to the nucleus. Required for pre-mRNA splicing as component of the spliceosome, including pre-catalytic, catalytic and post-catalytic spliceosomal complexes. Component of the U5 snRNP and the U4/U6-U5 tri-snRNP complex, a building block of the spliceosome. As a component of the minor spliceosome, involved in the splicing of U12-type introns in pre-mRNAs. In Homo sapiens (Human), this protein is 116 kDa U5 small nuclear ribonucleoprotein component (EFTUD2).